Reading from the N-terminus, the 298-residue chain is DNA-3-methyladenine glycosylase (298 aa).

The transit peptide at 1 to 17 (MVTPALQMKKPKQFCRR) directs the protein to the mitochondrion. Residues 1–65 (MVTPALQMKK…CPRERCLGPP (65 aa)) are disordered. Residues 9–25 (KKPKQFCRRMGQKKQRP) are compositionally biased toward basic residues. Residues serine 78 and serine 252 each carry the phosphoserine modification.

Belongs to the DNA glycosylase MPG family. Binds MBD1. Binds SSBP1.

The protein resides in the cytoplasm. Its subcellular location is the mitochondrion matrix. It is found in the mitochondrion nucleoid. It localises to the nucleus. It carries out the reaction Hydrolysis of alkylated DNA, releasing 3-methyladenine, 3-methylguanine, 7-methylguanine and 7-methyladenine.. With respect to regulation, binding to SSBP1 in mitochondria inhibits glycosylase activity in the context of a single-stranded DNA (ssDNA), but not a double-stranded DNA (dsDNA) substrates. In terms of biological role, hydrolysis of the deoxyribose N-glycosidic bond to excise 3-methyladenine, and 7-methylguanine from the damaged DNA polymer formed by alkylation lesions. In Homo sapiens (Human), this protein is DNA-3-methyladenine glycosylase (MPG).